The sequence spans 380 residues: L-lactate dehydrogenase (380 aa).

The region spanning 1–380 (MIISSASDYR…DASILVKAVA (380 aa)) is the FMN hydroxy acid dehydrogenase domain. Residue tyrosine 24 coordinates substrate. Serine 106 and glutamine 127 together coordinate FMN. Tyrosine 129 serves as a coordination point for substrate. Threonine 155 is an FMN binding site. Arginine 164 is a binding site for substrate. Lysine 251 provides a ligand contact to FMN. The Proton acceptor role is filled by histidine 275. Position 278 (arginine 278) interacts with substrate. An FMN-binding site is contributed by 306–330 (DSGIRSGLDVVRMLALGAKGVLLGR).

Belongs to the FMN-dependent alpha-hydroxy acid dehydrogenase family. In terms of assembly, homotetramer. The cofactor is FMN.

It localises to the cell inner membrane. It catalyses the reaction (S)-lactate + A = pyruvate + AH2. In terms of biological role, catalyzes the conversion of L-lactate to pyruvate. Is coupled to the respiratory chain. The chain is L-lactate dehydrogenase from Pseudomonas syringae pv. syringae (strain B728a).